The sequence spans 710 residues: Polyribonucleotide nucleotidyltransferase (710 aa).

The Mg(2+) site is built by D488 and D494. Residues 555–614 (PRIETITIPTDKIRDVIGSGGKVIREIVETTGAKVDVNDDGVIKVSSSDGASIKAALDWI) enclose the KH domain. The 69-residue stretch at 624–692 (GQIYKGKVVK…DRGKVRLSMK (69 aa)) folds into the S1 motif domain.

The protein belongs to the polyribonucleotide nucleotidyltransferase family. The cofactor is Mg(2+).

It is found in the cytoplasm. It catalyses the reaction RNA(n+1) + phosphate = RNA(n) + a ribonucleoside 5'-diphosphate. Involved in mRNA degradation. Catalyzes the phosphorolysis of single-stranded polyribonucleotides processively in the 3'- to 5'-direction. In Maricaulis maris (strain MCS10) (Caulobacter maris), this protein is Polyribonucleotide nucleotidyltransferase.